We begin with the raw amino-acid sequence, 430 residues long: Dihydroorotase (430 aa).

Histidine 61 and histidine 63 together coordinate Zn(2+). Substrate-binding positions include 63-65 and asparagine 95; that span reads HLR. The Zn(2+) site is built by aspartate 153, histidine 180, and histidine 233. Asparagine 279 is a binding site for substrate. Aspartate 306 provides a ligand contact to Zn(2+). Residue aspartate 306 is part of the active site. Residues histidine 310 and 324–325 contribute to the substrate site; that span reads FG.

The protein belongs to the metallo-dependent hydrolases superfamily. DHOase family. Class I DHOase subfamily. The cofactor is Zn(2+).

It catalyses the reaction (S)-dihydroorotate + H2O = N-carbamoyl-L-aspartate + H(+). It functions in the pathway pyrimidine metabolism; UMP biosynthesis via de novo pathway; (S)-dihydroorotate from bicarbonate: step 3/3. In terms of biological role, catalyzes the reversible cyclization of carbamoyl aspartate to dihydroorotate. The protein is Dihydroorotase of Lactiplantibacillus plantarum (strain ATCC BAA-793 / NCIMB 8826 / WCFS1) (Lactobacillus plantarum).